We begin with the raw amino-acid sequence, 379 residues long: Cytochrome b (379 aa).

Helical transmembrane passes span 33–53 (FGSL…FLAM), 77–98 (WLIR…FIHV), 113–133 (WNIG…GYVL), and 178–198 (FFAF…VHLL). Heme b contacts are provided by His83 and His97. Residues His182 and His196 each contribute to the heme b site. His201 contacts a ubiquinone. A run of 4 helical transmembrane segments spans residues 226-246 (TKDL…ALFF), 288-308 (LGGV…PLLN), 320-340 (VTQV…WIGG), and 347-367 (FTMI…ILIP).

This sequence belongs to the cytochrome b family. As to quaternary structure, the cytochrome bc1 complex contains 11 subunits: 3 respiratory subunits (MT-CYB, CYC1 and UQCRFS1), 2 core proteins (UQCRC1 and UQCRC2) and 6 low-molecular weight proteins (UQCRH/QCR6, UQCRB/QCR7, UQCRQ/QCR8, UQCR10/QCR9, UQCR11/QCR10 and a cleavage product of UQCRFS1). This cytochrome bc1 complex then forms a dimer. Heme b is required as a cofactor.

Its subcellular location is the mitochondrion inner membrane. Functionally, component of the ubiquinol-cytochrome c reductase complex (complex III or cytochrome b-c1 complex) that is part of the mitochondrial respiratory chain. The b-c1 complex mediates electron transfer from ubiquinol to cytochrome c. Contributes to the generation of a proton gradient across the mitochondrial membrane that is then used for ATP synthesis. This is Cytochrome b (MT-CYB) from Akodon lutescens puer (Altiplano grass mouse).